Here is a 211-residue protein sequence, read N- to C-terminus: Endo-1,4-beta-xylanase 5 (211 aa).

A signal peptide spans 1 to 16 (MKVTAAFASLLLTAFA). The region spanning 19 to 210 (APEPVLVSRS…GVGSASVTIS (192 aa)) is the GH11 domain. Glu106 (nucleophile) is an active-site residue. Glu197 (proton donor) is an active-site residue.

It belongs to the glycosyl hydrolase 11 (cellulase G) family.

The protein localises to the secreted. The enzyme catalyses Endohydrolysis of (1-&gt;4)-beta-D-xylosidic linkages in xylans.. It participates in glycan degradation; xylan degradation. Its function is as follows. Endo-1,4-beta-xylanase involved in the hydrolysis of xylan, a major structural heterogeneous polysaccharide found in plant biomass representing the second most abundant polysaccharide in the biosphere, after cellulose. The chain is Endo-1,4-beta-xylanase 5 (XYN5) from Aspergillus niger.